The following is a 343-amino-acid chain: Sulfate/thiosulfate import ATP-binding protein CysA (343 aa).

Residues 3–237 (IRISHLRKQF…PASPFVYSFV (235 aa)) form the ABC transporter domain. Position 35–42 (35–42 (GPSGSGKT)) interacts with ATP.

This sequence belongs to the ABC transporter superfamily. Sulfate/tungstate importer (TC 3.A.1.6) family. In terms of assembly, the complex is composed of two ATP-binding proteins (CysA), two transmembrane proteins (CysT and CysW) and a solute-binding protein (CysP).

The protein resides in the cell inner membrane. The catalysed reaction is sulfate(out) + ATP + H2O = sulfate(in) + ADP + phosphate + H(+). The enzyme catalyses thiosulfate(out) + ATP + H2O = thiosulfate(in) + ADP + phosphate + H(+). Part of the ABC transporter complex CysAWTP involved in sulfate/thiosulfate import. Responsible for energy coupling to the transport system. The sequence is that of Sulfate/thiosulfate import ATP-binding protein CysA from Xanthomonas campestris pv. campestris (strain ATCC 33913 / DSM 3586 / NCPPB 528 / LMG 568 / P 25).